A 64-amino-acid polypeptide reads, in one-letter code: Conotoxin VnMRCL-04 (64 aa).

An N-terminal signal peptide occupies residues 1–22; the sequence is MRCLPVFVILLLLIASAPSVDA. Residues 23–48 constitute a propeptide that is removed on maturation; sequence RPKTKDDVPLASFHGNAERTLLNILR. Tryptophan amide is present on tryptophan 63.

The protein belongs to the conotoxin T superfamily. Post-translationally, contains 2 disulfide bonds that can be either 'C1-C3, C2-C4' or 'C1-C4, C2-C3', since these disulfide connectivities have been observed for conotoxins with cysteine framework V (for examples, see AC P0DQQ7 and AC P81755). Expressed by the venom duct.

It localises to the secreted. The protein is Conotoxin VnMRCL-04 of Conus ventricosus (Mediterranean cone).